The sequence spans 153 residues: Ribosome maturation factor RimP (153 aa).

Belongs to the RimP family.

The protein resides in the cytoplasm. Functionally, required for maturation of 30S ribosomal subunits. The polypeptide is Ribosome maturation factor RimP (Synechococcus elongatus (strain ATCC 33912 / PCC 7942 / FACHB-805) (Anacystis nidulans R2)).